Consider the following 439-residue polypeptide: Secreted RxLR effector protein 117 (439 aa).

The first 21 residues, 1–21 (MRGAYYVLAALLVVASSQIAA), serve as a signal peptide directing secretion. A RxLR-dEER motif is present at residues 48 to 65 (RYLRGGHDVHDDSANEER).

The protein belongs to the RxLR effector family.

The protein localises to the secreted. It localises to the host nucleus. Its function is as follows. Secreted effector that acts as an elicitor that induces cell death in host plant cells. The polypeptide is Secreted RxLR effector protein 117 (Plasmopara viticola (Downy mildew of grapevine)).